The primary structure comprises 413 residues: Serine/threonine transporter SstT (413 aa).

Helical transmembrane passes span 22 to 42 (GLLL…VLGF), 61 to 81 (AVAP…KQLG), 89 to 109 (IVVL…LFSF), 148 to 168 (ALFN…GIAL), 189 to 209 (IVHF…AETL), 224 to 244 (LVVL…ILVF), 305 to 325 (MAGA…TLGI), 337 to 357 (VVAS…LLLI), and 363 to 383 (LFGI…VIGV).

It belongs to the dicarboxylate/amino acid:cation symporter (DAACS) (TC 2.A.23) family.

The protein resides in the cell inner membrane. The enzyme catalyses L-serine(in) + Na(+)(in) = L-serine(out) + Na(+)(out). It catalyses the reaction L-threonine(in) + Na(+)(in) = L-threonine(out) + Na(+)(out). Its function is as follows. Involved in the import of serine and threonine into the cell, with the concomitant import of sodium (symport system). This chain is Serine/threonine transporter SstT, found in Histophilus somni (strain 129Pt) (Haemophilus somnus).